We begin with the raw amino-acid sequence, 197 residues long: 7-methyl-GTP pyrophosphatase (197 aa).

The Proton acceptor role is filled by D72.

This sequence belongs to the Maf family. YceF subfamily. It depends on a divalent metal cation as a cofactor.

The protein localises to the cytoplasm. The enzyme catalyses N(7)-methyl-GTP + H2O = N(7)-methyl-GMP + diphosphate + H(+). Nucleoside triphosphate pyrophosphatase that hydrolyzes 7-methyl-GTP (m(7)GTP). May have a dual role in cell division arrest and in preventing the incorporation of modified nucleotides into cellular nucleic acids. This is 7-methyl-GTP pyrophosphatase from Bordetella avium (strain 197N).